A 790-amino-acid chain; its full sequence is Solute carrier family 26 member 9 (790 aa).

The Cytoplasmic segment spans residues 1–70 (MNQPRPRYVV…WLPKYKIKDY (70 aa)). Residues 71–96 (IIPDLLGGLSGGCIQVPQGMAFALLA) traverse the membrane as a helical segment. Residues 97–100 (NLPA) are Extracellular-facing. Residues 101–109 (VNGLYSSFF) traverse the membrane as a helical segment. Residues 110–129 (PLLTYFFLGGIHQMVPGTFA) lie on the Cytoplasmic side of the membrane. The chain crosses the membrane as a helical span at residues 130-142 (VISILVGNICLQL). Residues 143 to 162 (APESKFQIFNNVTNETYVDT) are Extracellular-facing. The chain crosses the membrane as a helical span at residues 163–191 (AAMEAERLHVSATLACLTAVIQMALGFMQ). Residues 192-201 (FGFVAIYLSE) are Cytoplasmic-facing. The chain crosses the membrane as a helical span at residues 202-224 (SFIRGFMTAAGLQILISVLKYIF). Over 225–237 (GLTIPSYTGPGSI) the chain is Extracellular. The helical intramembrane region spans 238–246 (VFTFIDICK). Topologically, residues 247-254 (NLPHTNIA) are extracellular. A helical transmembrane segment spans residues 255–275 (SLIFALVSGVFLVLVKELNAR). Residues 276-286 (YMHKIHFPIPT) lie on the Cytoplasmic side of the membrane. Residues 287 to 299 (EMIVVVVATAISG) form a helical membrane-spanning segment. The Extracellular portion of the chain corresponds to 300–334 (SCKMPKKYHMQIVGEIRQGFPTPVAPMVSQWKGMV). Residues 335-358 (GTAFSLAIVGYVINLAMGRTLASK) traverse the membrane as a helical segment. Over 359–365 (HGYDVDS) the chain is Cytoplasmic. Residues 366 to 379 (NQEMIALGCSNFFG) form a helical membrane-spanning segment. Residues 380 to 390 (SFFKIHVICCA) are Extracellular-facing. A helical membrane pass occupies residues 391–400 (LSVTLAVDGA). The Cytoplasmic segment spans residues 401–405 (GGKSQ). Residues 406-419 (VASLCVSLVVMITM) form a helical membrane-spanning segment. Topologically, residues 420 to 431 (LVLGSYLYPLPK) are extracellular. A helical transmembrane segment spans residues 432-457 (AVLGALIAVNLKNSLKQLTDPYYLWR). At 458–461 (KSKL) the chain is on the cytoplasmic side. Residues 462–476 (DCCVWVVSFLSSFFL) form a helical membrane-spanning segment. Residues 477 to 479 (SLP) are Extracellular-facing. A helical membrane pass occupies residues 480-498 (YGVAVGVAFSILVVIFQTQ). Over 499-790 (FRNGSTLAQV…MFHTETLTAL (292 aa)) the chain is Cytoplasmic. The STAS domain occupies 519–737 (TYNRAQEIAG…PSIHDAVLFA (219 aa)).

This sequence belongs to the SLC26A/SulP transporter (TC 2.A.53) family. As to quaternary structure, homodimer. In terms of tissue distribution, expressed in stomach and trachea. Abundantly expressed in the apical domain of the surface epithelial cells and the deep cells in the gastric gland. Also expressed in heart, brain, lung and liver.

Its subcellular location is the cell membrane. It localises to the endomembrane system. It catalyses the reaction chloride(in) = chloride(out). It carries out the reaction hydrogencarbonate(in) + chloride(out) = hydrogencarbonate(out) + chloride(in). Inhibited by ammonium and thiosulfate. Functionally, ion transporter that can act both as an ion channel and anion exchanger. Mainly acts as a chloride channel, which mediate uncoupled chloride anion transport in an alternate-access mechanism where a saturable binding site is alternately exposed to either one or the other side of the membrane. Also acts as a DIDS- and thiosulfate- sensitive anion exchanger the exchange of chloride for bicarbonate ions across the cell membrane. The chain is Solute carrier family 26 member 9 from Mus musculus (Mouse).